The chain runs to 165 residues: Pro-MCH (165 aa).

The signal sequence occupies residues 1 to 21 (MAKMTLSSYMLMLAFSLFSQG). The tract at residues 66-89 (YKNDESGFMNDDDNKNSKNTGSKQ) is disordered. Ile143 is modified (isoleucine amide). A disulfide bridge connects residues Cys153 and Cys162.

The protein belongs to the MCH family. Pro-MCH is processed differentially in the brain and in peripheral organs producing two neuropeptides; NEI and MCH. A third peptide, NGE, may also be produced. Preferential processing in neurons by prohormone convertase 2 (PC2) generates NEI. MCH is generated in neurons of the lateral hypothalmic area by several prohormone convertases including PC1/3, PC2 and PC5/6. As to expression, predominantly expressed in hypothalamus. Also found in heart, intestine, spleen and testis (spermatogonia, early spermatocytes and Sertoli cells). In brain only mature MCH and NEI peptides are present. In peripheral tissues a large product, encompassing the NEI and MCH domains of the precursor, is found predominantly.

It is found in the secreted. In terms of biological role, MCH may act as a neurotransmitter or neuromodulator in a broad array of neuronal functions directed toward the regulation of goal-directed behavior, such as food intake, and general arousal. This Mus musculus (Mouse) protein is Pro-MCH (Pmch).